The following is a 183-amino-acid chain: Transposon gamma-delta resolvase (183 aa).

A Resolvase/invertase-type recombinase catalytic domain is found at 2–137 (RLFGYARVST…EGRQEAMAKG (136 aa)). S10 serves as the catalytic O-(5'-phospho-DNA)-serine intermediate. The H-T-H motif DNA-binding region spans 161 to 180 (ASHISKTMNIARSTVYKVIN).

Belongs to the site-specific recombinase resolvase family.

This protein catalyzes the site-specific recombination of the transposon and also regulates its frequency of transposition. This chain is Transposon gamma-delta resolvase (tnpR), found in Escherichia coli (strain K12).